Consider the following 81-residue polypeptide: Small ribosomal subunit protein bS16 (81 aa).

This sequence belongs to the bacterial ribosomal protein bS16 family.

The protein is Small ribosomal subunit protein bS16 of Clostridium botulinum (strain Eklund 17B / Type B).